Here is a 180-residue protein sequence, read N- to C-terminus: Oligoribonuclease (180 aa).

Residues 7–170 form the Exonuclease domain; sequence LIWIDLEMTG…DDIRESIAEL (164 aa). Residue tyrosine 128 is part of the active site.

The protein belongs to the oligoribonuclease family.

It localises to the cytoplasm. Its function is as follows. 3'-to-5' exoribonuclease specific for small oligoribonucleotides. The chain is Oligoribonuclease from Pseudomonas entomophila (strain L48).